The chain runs to 141 residues: Putative pre-16S rRNA nuclease (141 aa).

The protein belongs to the YqgF nuclease family.

The protein localises to the cytoplasm. Its function is as follows. Could be a nuclease involved in processing of the 5'-end of pre-16S rRNA. This chain is Putative pre-16S rRNA nuclease, found in Vibrio parahaemolyticus serotype O3:K6 (strain RIMD 2210633).